The primary structure comprises 357 residues: Heat-inducible transcription repressor HrcA (357 aa).

This sequence belongs to the HrcA family.

In terms of biological role, negative regulator of class I heat shock genes (grpE-dnaK-dnaJ and groELS operons). Prevents heat-shock induction of these operons. The chain is Heat-inducible transcription repressor HrcA from Chlorobium phaeovibrioides (strain DSM 265 / 1930) (Prosthecochloris vibrioformis (strain DSM 265)).